The primary structure comprises 411 residues: Na(+)/H(+) antiporter NhaA 2 (411 aa).

The next 10 helical transmembrane spans lie at 18–38, 59–79, 97–117, 127–147, 167–187, 218–238, 261–281, 297–317, 338–358, and 366–386; these read VGGS…NSPV, LTVG…VAGL, LLPI…AATI, GWAI…ALTG, LLAI…LWLL, WYCM…LGLL, PLSA…VALS, VIAG…WLAI, VLGA…LAGI, and IAKV…SALL.

Belongs to the NhaA Na(+)/H(+) (TC 2.A.33) antiporter family.

Its subcellular location is the cell membrane. It carries out the reaction Na(+)(in) + 2 H(+)(out) = Na(+)(out) + 2 H(+)(in). Na(+)/H(+) antiporter that extrudes sodium in exchange for external protons. This is Na(+)/H(+) antiporter NhaA 2 from Rhodococcus jostii (strain RHA1).